The primary structure comprises 142 residues: Small ribosomal subunit protein uS9 (142 aa).

It belongs to the universal ribosomal protein uS9 family. As to quaternary structure, component of the small ribosomal subunit (SSU). Mature N.crassa ribosomes consist of a small (40S) and a large (60S) subunit. The 40S small subunit contains 1 molecule of ribosomal RNA (18S rRNA) and at least 32 different proteins. The large 60S subunit contains 3 rRNA molecules (26S, 5.8S and 5S rRNA) and at least 42 different proteins.

The protein resides in the cytoplasm. Functionally, component of the ribosome, a large ribonucleoprotein complex responsible for the synthesis of proteins in the cell. The small ribosomal subunit (SSU) binds messenger RNAs (mRNAs) and translates the encoded message by selecting cognate aminoacyl-transfer RNA (tRNA) molecules. The large subunit (LSU) contains the ribosomal catalytic site termed the peptidyl transferase center (PTC), which catalyzes the formation of peptide bonds, thereby polymerizing the amino acids delivered by tRNAs into a polypeptide chain. The nascent polypeptides leave the ribosome through a tunnel in the LSU and interact with protein factors that function in enzymatic processing, targeting, and the membrane insertion of nascent chains at the exit of the ribosomal tunnel. This Neurospora crassa (strain ATCC 24698 / 74-OR23-1A / CBS 708.71 / DSM 1257 / FGSC 987) protein is Small ribosomal subunit protein uS9 (rps-16).